The sequence spans 354 residues: Anthranilate phosphoribosyltransferase (354 aa).

Belongs to the anthranilate phosphoribosyltransferase family.

It carries out the reaction N-(5-phospho-beta-D-ribosyl)anthranilate + diphosphate = 5-phospho-alpha-D-ribose 1-diphosphate + anthranilate. Its pathway is amino-acid biosynthesis; L-tryptophan biosynthesis; L-tryptophan from chorismate: step 2/5. This chain is Anthranilate phosphoribosyltransferase (trp4), found in Schizosaccharomyces pombe (strain 972 / ATCC 24843) (Fission yeast).